The chain runs to 225 residues: 7-cyano-7-deazaguanine synthase (225 aa).

Residue 10–20 (VSGGLDSTTAL) coordinates ATP. Zn(2+)-binding residues include C189, C199, C202, and C205.

It belongs to the QueC family. The cofactor is Zn(2+).

The enzyme catalyses 7-carboxy-7-deazaguanine + NH4(+) + ATP = 7-cyano-7-deazaguanine + ADP + phosphate + H2O + H(+). Its pathway is purine metabolism; 7-cyano-7-deazaguanine biosynthesis. In terms of biological role, catalyzes the ATP-dependent conversion of 7-carboxy-7-deazaguanine (CDG) to 7-cyano-7-deazaguanine (preQ(0)). This is 7-cyano-7-deazaguanine synthase from Saccharophagus degradans (strain 2-40 / ATCC 43961 / DSM 17024).